Here is a 1025-residue protein sequence, read N- to C-terminus: MEPFTNDRLQLPRNMIENSMFEEEPDVVDLAKEPCLHPLEPDEVEYEPRGSRLLVRGLGEHEMEEDEEDYESSAKLLGMSFMNRSSGLRNSATGYRQSPDGACSVPSARTMVVCAFVIVVAVSVIMVIYLLPRCTFTKEGCHKKNQSIGLIQPFATNGKLFPWAQIRLPTAVVPLRYELSLHPNLTSMTFRGSVTISVQALQVTWNIILHSTGHNISRVTFMSAVSSQEKQAEILEYAYHGQIAIVAPEALLAGHNYTLKIEYSANISSSYYGFYGFSYTDESNEKKYFAATQFEPLAARSAFPCFDEPAFKATFIIKIIRDEQYTALSNMPKKSSVVLDDGLVQDEFSESVKMSTYLVAFIVGEMKNLSQDVNGTLVSIYAVPEKIGQVHYALETTVKLLEFFQNYFEIQYPLKKLDLVAIPDFEAGAMENWGLLTFREETLLYDSNTSSMADRKLVTKIIAHELAHQWFGNLVTMKWWNDLWLNEGFATFMEYFSLEKIFKELSSYEDFLDARFKTMKKDSLNSSHPISSSVQSSEQIEEMFDSLSYFKGSSLLLMLKTYLSEDVFQHAVVLYLHNHSYASIQSDDLWDSFNEVTNQTLDVKRMMKTWTLQKGFPLVTVQKKGKELFIQQERFFLNMKPEIQPSDTSYLWHIPLSYVTEGRNYSKYQSVSLLDKKSGVINLTEEVLWVKVNINMNGYYIVHYADDDWEALIHQLKINPYVLSDKDRANLINNIFELAGLGKVPLKRAFDLINYLGNENHTAPITEALFQTDLIYNLLEKLGYMDLASRLVTRVFKLLQNQIQQQTWTDEGTPSMRELRSALLEFACTHNLGNCSTTAMKLFDDWMASNGTQSLPTDVMTTVFKVGAKTDKGWSFLLGKYISIGSEAEKNKILEALASSEDVRKLYWLMKSSLNGDNFRTQKLSFIIRTVGRHFPGHLLAWDFVKENWNKLVQKFPLGSYTIQNIVAGSTYLFSTKTHLSEVQAFFENQSEATFRLRCVQEALEVIQLNIQWMEKNLKSLTWWL.

Met-1 bears the N-acetylmethionine mark. Over 1–110 (MEPFTNDRLQ…GACSVPSART (110 aa)) the chain is Cytoplasmic. The Dileucine internalization motif signature appears at 53–54 (LL). Tyr-70 carries the post-translational modification Phosphotyrosine. A Dileucine internalization motif motif is present at residues 76-77 (LL). Phosphoserine occurs at positions 80 and 91. The tankyrase binding stretch occupies residues 96 to 101 (RQSPDG). Residues 111 to 131 (MVVCAFVIVVAVSVIMVIYLL) form a helical; Signal-anchor for type II membrane protein membrane-spanning segment. Topologically, residues 132–1025 (PRCTFTKEGC…KNLKSLTWWL (894 aa)) are extracellular. N-linked (GlcNAc...) asparagine glycans are attached at residues Asn-145, Asn-184, Asn-215, Asn-256, and Asn-266. Substrate is bound at residue Glu-295. Residues Asn-368 and Asn-374 are each glycosylated (N-linked (GlcNAc...) asparagine). 428 to 432 (GAMEN) contacts substrate. An N-linked (GlcNAc...) asparagine glycan is attached at Asn-448. His-464 serves as a coordination point for Zn(2+). The active-site Proton acceptor is the Glu-465. The Zn(2+) site is built by His-468 and Glu-487. Residues Asn-525, Asn-578, Asn-598, Asn-664, Asn-682, Asn-760, Asn-834, Asn-850, and Asn-989 are each glycosylated (N-linked (GlcNAc...) asparagine).

Belongs to the peptidase M1 family. As to quaternary structure, homodimer. Binds tankyrases 1 and 2. The cofactor is Zn(2+). The pregnancy serum form is derived from the membrane-bound form by proteolytic processing. In terms of processing, N-glycosylated. Highly expressed in placenta, heart, kidney and small intestine. Detected at lower levels in neuronal cells in the brain, in skeletal muscle, spleen, liver, testes and colon.

The protein localises to the cell membrane. The protein resides in the secreted. It carries out the reaction Release of an N-terminal amino acid, Cys-|-Xaa-, in which the half-cystine residue is involved in a disulfide loop, notably in oxytocin or vasopressin. Hydrolysis rates on a range of aminoacyl arylamides exceed that for the cystinyl derivative, however.. Release of an N-terminal amino acid, cleaves before cysteine, leucine as well as other amino acids. Degrades peptide hormones such as oxytocin, vasopressin and angiotensin III, and plays a role in maintaining homeostasis during pregnancy. May be involved in the inactivation of neuronal peptides in the brain. Cleaves Met-enkephalin and dynorphin. Binds angiotensin IV and may be the angiotensin IV receptor in the brain. The sequence is that of Leucyl-cystinyl aminopeptidase (LNPEP) from Homo sapiens (Human).